The primary structure comprises 163 residues: MFVDDVTRAFESGDFARPNLFQVEISYLGQNFTFQCKATALPAGIVEKIPVGFMNRKINVAGDRTFDDWTVTVMNDEAHDARQKFVDWQSIAAGQGNEITGGKPAEYKKSAIVRQYARDAKTVTKEIEIKGLWPTNVGELQLDWDSNNEIQTFEVTLALDYWE.

The protein belongs to the T4-like viruses Gp19 protein family. Homohexamer. The tube is composed of gp19 hexameric rings. Interacts with gp54.

It is found in the virion. In terms of biological role, forms the central cylindrical rigid tube, which is surrounded by the outer contractile sheath assembled from gp18 subunits. The tail tube first 2 annuli are formed by gp48 and gp54, which are in continuation of the spike complex. During infection, contraction of the sheath drives the central tube through the host outer membrane, creating a channel for DNA ejection from the capsid into the host cell. The sequence is that of Tail tube protein gp19 (19) from Escherichia coli (Bacteriophage T4).